Reading from the N-terminus, the 286-residue chain is 3-hydroxyanthranilate 3,4-dioxygenase (286 aa).

The domain A (catalytic) stretch occupies residues 1-160; it reads MERCVRVKSW…SEQYRTGKPN (160 aa). Arg-43 provides a ligand contact to O2. Residues His-47, Glu-53, and His-91 each contribute to the Fe cation site. Residue Glu-53 participates in substrate binding. Arg-95 and Glu-105 together coordinate substrate. The tract at residues 161–177 is linker; sequence PDQLLKEPPFPLSTRSV. The tract at residues 178 to 286 is domain B; that stretch reads MEPMSLKAWL…QDPACKKPLG (109 aa).

This sequence belongs to the 3-HAO family. As to quaternary structure, monomer. The cofactor is Fe(2+).

It localises to the cytoplasm. It is found in the cytosol. The catalysed reaction is 3-hydroxyanthranilate + O2 = (2Z,4Z)-2-amino-3-carboxymuconate 6-semialdehyde. The protein operates within cofactor biosynthesis; NAD(+) biosynthesis; quinolinate from L-kynurenine: step 3/3. Functionally, catalyzes the oxidative ring opening of 3-hydroxyanthranilate to 2-amino-3-carboxymuconate semialdehyde, which spontaneously cyclizes to quinolinate. This is 3-hydroxyanthranilate 3,4-dioxygenase (Haao) from Rattus norvegicus (Rat).